We begin with the raw amino-acid sequence, 828 residues long: Periplasmic nitrate reductase (828 aa).

The tat-type signal signal peptide spans 1–31 (MKLSRRSFMKANAVAAAAAAAGLSVPGVARA). Residues 39-95 (IKWDKAPCRFCGTGCGVLVGTQQGRVVACQGDPDAPVNRGLNCIKGYFLPKIMYGKD) form the 4Fe-4S Mo/W bis-MGD-type domain. Cys46, Cys49, Cys53, and Cys81 together coordinate [4Fe-4S] cluster. Mo-bis(molybdopterin guanine dinucleotide)-binding positions include Lys83, Gln150, Asn175, Cys179, 212 to 219 (WGSNMAEM), 243 to 247 (STFQH), 262 to 264 (QSD), Met372, Gln376, Asn482, 508 to 509 (SD), Lys531, Asp558, and 718 to 727 (TGRVLEHWHT). A substrate-binding site is contributed by Phe794. Mo-bis(molybdopterin guanine dinucleotide) is bound by residues Asn802 and Lys819.

Belongs to the prokaryotic molybdopterin-containing oxidoreductase family. NasA/NapA/NarB subfamily. Component of the periplasmic nitrate reductase NapAB complex composed of NapA and NapB. The cofactor is [4Fe-4S] cluster. Requires Mo-bis(molybdopterin guanine dinucleotide) as cofactor. Post-translationally, predicted to be exported by the Tat system. The position of the signal peptide cleavage has not been experimentally proven.

The protein resides in the periplasm. It carries out the reaction 2 Fe(II)-[cytochrome] + nitrate + 2 H(+) = 2 Fe(III)-[cytochrome] + nitrite + H2O. In terms of biological role, catalytic subunit of the periplasmic nitrate reductase complex NapAB. Receives electrons from NapB and catalyzes the reduction of nitrate to nitrite. The sequence is that of Periplasmic nitrate reductase from Salmonella agona (strain SL483).